Here is a 176-residue protein sequence, read N- to C-terminus: MFDATTILGYKADGKAVIGGDGQVTFGDTVLKSNATKIRTLYEGKILAGFAGSTADAFNLFDMFEGILAEKRGDLFKSVIGFSKMWRKDKHLRQLEAMMIVLNTEHIFILSGTGDVVEPQDGKIAAIGSGGNYAISAARALDKHANLEPRELVQESLEVAGDLCIYTNKNIKILEL.

The active site involves Thr5. Gly161, Cys164, and Thr167 together coordinate Na(+).

This sequence belongs to the peptidase T1B family. HslV subfamily. As to quaternary structure, a double ring-shaped homohexamer of HslV is capped on each side by a ring-shaped HslU homohexamer. The assembly of the HslU/HslV complex is dependent on binding of ATP.

It localises to the cytoplasm. It catalyses the reaction ATP-dependent cleavage of peptide bonds with broad specificity.. With respect to regulation, allosterically activated by HslU binding. Functionally, protease subunit of a proteasome-like degradation complex believed to be a general protein degrading machinery. The sequence is that of ATP-dependent protease subunit HslV from Sulfurovum sp. (strain NBC37-1).